Here is a 247-residue protein sequence, read N- to C-terminus: tRNA pseudouridine synthase A 1 (247 aa).

The active-site Nucleophile is Asp53. Tyr111 is a binding site for substrate.

It belongs to the tRNA pseudouridine synthase TruA family. As to quaternary structure, homodimer.

The catalysed reaction is uridine(38/39/40) in tRNA = pseudouridine(38/39/40) in tRNA. Functionally, formation of pseudouridine at positions 38, 39 and 40 in the anticodon stem and loop of transfer RNAs. The chain is tRNA pseudouridine synthase A 1 from Bacillus cereus (strain ATCC 14579 / DSM 31 / CCUG 7414 / JCM 2152 / NBRC 15305 / NCIMB 9373 / NCTC 2599 / NRRL B-3711).